The sequence spans 258 residues: Aspartate/glutamate leucyltransferase (258 aa).

Belongs to the R-transferase family. Bpt subfamily.

The protein resides in the cytoplasm. The catalysed reaction is N-terminal L-glutamyl-[protein] + L-leucyl-tRNA(Leu) = N-terminal L-leucyl-L-glutamyl-[protein] + tRNA(Leu) + H(+). It catalyses the reaction N-terminal L-aspartyl-[protein] + L-leucyl-tRNA(Leu) = N-terminal L-leucyl-L-aspartyl-[protein] + tRNA(Leu) + H(+). Functions in the N-end rule pathway of protein degradation where it conjugates Leu from its aminoacyl-tRNA to the N-termini of proteins containing an N-terminal aspartate or glutamate. This is Aspartate/glutamate leucyltransferase from Rhodopseudomonas palustris (strain TIE-1).